The primary structure comprises 513 residues: Probable metalloreductase AIM14 (513 aa).

7 helical membrane-spanning segments follow: residues 22 to 42 (GYII…AHFL), 66 to 86 (PFWV…FTNV), 103 to 123 (LAFC…LLGQ), 138 to 158 (LIIL…TIHH), 166 to 186 (WANL…IVSS), 193 to 213 (FYSY…LLMI), and 219 to 239 (GVSD…ASRV). A Ferric oxidoreductase domain is found at 100-211 (LGRLAFCLVP…NFTVALFVLL (112 aa)). Residues 240-368 (YNGYSVPGLT…GIPLYEYFDN (129 aa)) form the FAD-binding FR-type domain.

It belongs to the ferric reductase (FRE) family. AIM14 subfamily.

The protein resides in the membrane. Functionally, probable cell surface metalloreductase. May be involved in iron or copper homeostasis. This Clavispora lusitaniae (strain ATCC 42720) (Yeast) protein is Probable metalloreductase AIM14 (AIM14).